A 219-amino-acid chain; its full sequence is Cytidylate kinase (219 aa).

21-29 (GPAASGKGT) serves as a coordination point for ATP.

Belongs to the cytidylate kinase family. Type 1 subfamily.

It localises to the cytoplasm. The enzyme catalyses CMP + ATP = CDP + ADP. The catalysed reaction is dCMP + ATP = dCDP + ADP. This Rickettsia rickettsii (strain Iowa) protein is Cytidylate kinase.